The primary structure comprises 176 residues: PKHD-type hydroxylase Mfla_0096 (176 aa).

The region spanning 78–147 (KVFPPLFNRY…NQIARGTYGA (70 aa)) is the Fe2OG dioxygenase domain.

Requires Fe(2+) as cofactor. The cofactor is L-ascorbate.

The polypeptide is PKHD-type hydroxylase Mfla_0096 (Methylobacillus flagellatus (strain ATCC 51484 / DSM 6875 / VKM B-1610 / KT)).